Consider the following 159-residue polypeptide: Ribosomal RNA large subunit methyltransferase H (159 aa).

S-adenosyl-L-methionine contacts are provided by residues L76, G108, and 127-132 (FSKMTL).

This sequence belongs to the RNA methyltransferase RlmH family. In terms of assembly, homodimer.

The protein localises to the cytoplasm. The enzyme catalyses pseudouridine(1915) in 23S rRNA + S-adenosyl-L-methionine = N(3)-methylpseudouridine(1915) in 23S rRNA + S-adenosyl-L-homocysteine + H(+). Specifically methylates the pseudouridine at position 1915 (m3Psi1915) in 23S rRNA. This chain is Ribosomal RNA large subunit methyltransferase H, found in Bacillus cereus (strain ATCC 14579 / DSM 31 / CCUG 7414 / JCM 2152 / NBRC 15305 / NCIMB 9373 / NCTC 2599 / NRRL B-3711).